Here is a 156-residue protein sequence, read N- to C-terminus: Ribosomal RNA large subunit methyltransferase H (156 aa).

S-adenosyl-L-methionine contacts are provided by residues glycine 104 and 123-128 (LSAMTL).

The protein belongs to the RNA methyltransferase RlmH family. Homodimer.

It localises to the cytoplasm. The catalysed reaction is pseudouridine(1915) in 23S rRNA + S-adenosyl-L-methionine = N(3)-methylpseudouridine(1915) in 23S rRNA + S-adenosyl-L-homocysteine + H(+). In terms of biological role, specifically methylates the pseudouridine at position 1915 (m3Psi1915) in 23S rRNA. The chain is Ribosomal RNA large subunit methyltransferase H from Chromobacterium violaceum (strain ATCC 12472 / DSM 30191 / JCM 1249 / CCUG 213 / NBRC 12614 / NCIMB 9131 / NCTC 9757 / MK).